The primary structure comprises 420 residues: Isocitrate dehydrogenase [NADP] (420 aa).

NADP(+)-binding positions include 75–77 and Arg-82; that span reads TIT. Position 77 (Thr-77) interacts with substrate. Substrate is bound by residues 94-100, Arg-109, and Arg-132; that span reads SPNGTIR. Mn(2+) is bound at residue Asp-252. Lys-260 is a binding site for NADP(+). Mn(2+) is bound at residue Asp-275. Residues 310-315 and Asn-328 each bind NADP(+); that span reads GTVTRH.

This sequence belongs to the isocitrate and isopropylmalate dehydrogenases family. Requires Mg(2+) as cofactor. Mn(2+) serves as cofactor.

The enzyme catalyses D-threo-isocitrate + NADP(+) = 2-oxoglutarate + CO2 + NADPH. In terms of biological role, may function in the production of NADPH for fatty acid and sterol synthesis. The sequence is that of Isocitrate dehydrogenase [NADP] (IDP3) from Saccharomyces cerevisiae (strain ATCC 204508 / S288c) (Baker's yeast).